A 351-amino-acid chain; its full sequence is Biotin synthase (351 aa).

One can recognise a Radical SAM core domain in the interval 44-262 (NRVQVSTLLS…LAVARILMPQ (219 aa)). The [4Fe-4S] cluster site is built by cysteine 59, cysteine 63, and cysteine 66. The [2Fe-2S] cluster site is built by cysteine 103, cysteine 134, cysteine 194, and arginine 266.

It belongs to the radical SAM superfamily. Biotin synthase family. Homodimer. It depends on [4Fe-4S] cluster as a cofactor. [2Fe-2S] cluster is required as a cofactor.

The catalysed reaction is (4R,5S)-dethiobiotin + (sulfur carrier)-SH + 2 reduced [2Fe-2S]-[ferredoxin] + 2 S-adenosyl-L-methionine = (sulfur carrier)-H + biotin + 2 5'-deoxyadenosine + 2 L-methionine + 2 oxidized [2Fe-2S]-[ferredoxin]. Its pathway is cofactor biosynthesis; biotin biosynthesis; biotin from 7,8-diaminononanoate: step 2/2. Functionally, catalyzes the conversion of dethiobiotin (DTB) to biotin by the insertion of a sulfur atom into dethiobiotin via a radical-based mechanism. The sequence is that of Biotin synthase from Pseudomonas fluorescens (strain ATCC BAA-477 / NRRL B-23932 / Pf-5).